The primary structure comprises 315 residues: Aspartate carbamoyltransferase catalytic subunit (315 aa).

Positions 54 and 55 each coordinate carbamoyl phosphate. Position 82 (K82) interacts with L-aspartate. Residues R104, H134, and Q137 each coordinate carbamoyl phosphate. Residues R174 and R229 each contribute to the L-aspartate site. Residues G270 and P271 each coordinate carbamoyl phosphate.

This sequence belongs to the aspartate/ornithine carbamoyltransferase superfamily. ATCase family. Heterododecamer (2C3:3R2) of six catalytic PyrB chains organized as two trimers (C3), and six regulatory PyrI chains organized as three dimers (R2).

The catalysed reaction is carbamoyl phosphate + L-aspartate = N-carbamoyl-L-aspartate + phosphate + H(+). It participates in pyrimidine metabolism; UMP biosynthesis via de novo pathway; (S)-dihydroorotate from bicarbonate: step 2/3. Catalyzes the condensation of carbamoyl phosphate and aspartate to form carbamoyl aspartate and inorganic phosphate, the committed step in the de novo pyrimidine nucleotide biosynthesis pathway. This chain is Aspartate carbamoyltransferase catalytic subunit, found in Leifsonia xyli subsp. xyli (strain CTCB07).